A 184-amino-acid chain; its full sequence is C-phycoerythrin beta chain (184 aa).

Residues C48 and C59 each coordinate (2R,3E)-phycoerythrobilin. Residue N70 is modified to N4-methylasparagine. Residues C80 and C165 each coordinate (2R,3E)-phycoerythrobilin.

It belongs to the phycobiliprotein family. As to quaternary structure, heterodimer of an alpha and a beta chain. Contains three covalently linked bilin chromophores.

The protein localises to the cellular thylakoid membrane. In terms of biological role, light-harvesting photosynthetic bile pigment-protein from the phycobiliprotein complex. The chain is C-phycoerythrin beta chain (cpeB) from Microchaete diplosiphon (Fremyella diplosiphon).